A 250-amino-acid polypeptide reads, in one-letter code: Silencing boundary-establishment protein FUB1 (250 aa).

The tract at residues 179–250 (PDWSGGLPNP…GFGGSGSGFI (72 aa)) is disordered. Positions 202–213 (PNRRPAPRREDM) are enriched in basic and acidic residues. The segment covering 229-250 (PGSGGFGGSGSGGFGGSGSGFI) has biased composition (gly residues).

Belongs to the proteasome inhibitor PI31 family. In terms of assembly, interacts with the 20S proteasome.

Plays a role in the establishment of transcriptional silencing boundaries, preventing the propagation of heterochromatic silencing. This chain is Silencing boundary-establishment protein FUB1, found in Saccharomyces cerevisiae (strain ATCC 204508 / S288c) (Baker's yeast).